The chain runs to 67 residues: Moricin (67 aa).

An N-terminal signal peptide occupies residues 1-23 (MKLTSLFIFVIVALSLLFSSTDA).

It belongs to the moricin family. In terms of assembly, monomer.

The protein localises to the secreted. Its function is as follows. Antimicrobial peptide. Active against a broad spectrum of Gram-positive and Gram-negative bacteria including methicillin-resistant S.aureus ATCC 43 300, S.aureus BAA-39, pathogenic strains of L.monocytogenes, K.pneumoniae, E.coli O157:H7, S.typhimurium and multidrug-resistant S.typhimurium DT104 with minimum inhibitory concentration (MIC) of 1.4 uM for all except for S.aureus BAA-39. Also active against Serratia marcescens. Probably acts by disturbing membrane functions with its amphipathic alpha-helical structure. May protect a developing embryo from bacterial infection. This is Moricin from Manduca sexta (Tobacco hawkmoth).